The sequence spans 288 residues: MAEKKQWHETLHDQFGQYFAVDNVLYHEKTDHQDLIIFENAAFGRVMALDGVVQTTERDEFIYHEMMTHVPLLAHGHAKHVLIIGGGDGAMLREVTRHKNVESITMVEIDAGVVSFCRQYLPNHNAGSYDDPRFKLVIDDGVNFVNQTSQTFDVIISDCTDPIGPGESLFTSAFYEGCKRCLNPAGIFVAQNGVCFLQQEEAIDSHRKLSHYFSDVGFYQAAIPTYYGGIMTFAWATDNDALRHLSTEIIQARFLASGLKCRYYNPAVHTAAFALPQYLQDALASQPS.

Residues 9–238 enclose the PABS domain; it reads ETLHDQFGQY…GIMTFAWATD (230 aa). Q33 contributes to the S-methyl-5'-thioadenosine binding site. Residues H64 and D88 each coordinate spermidine. Residues E108 and 140 to 141 each bind S-methyl-5'-thioadenosine; that span reads DG. D158 functions as the Proton acceptor in the catalytic mechanism. Position 158–161 (158–161) interacts with spermidine; it reads DCTD. Residue P165 coordinates S-methyl-5'-thioadenosine.

The protein belongs to the spermidine/spermine synthase family. Homodimer or homotetramer.

It is found in the cytoplasm. It catalyses the reaction S-adenosyl 3-(methylsulfanyl)propylamine + putrescine = S-methyl-5'-thioadenosine + spermidine + H(+). The protein operates within amine and polyamine biosynthesis; spermidine biosynthesis; spermidine from putrescine: step 1/1. Its function is as follows. Catalyzes the irreversible transfer of a propylamine group from the amino donor S-adenosylmethioninamine (decarboxy-AdoMet) to putrescine (1,4-diaminobutane) to yield spermidine. In Escherichia coli O81 (strain ED1a), this protein is Polyamine aminopropyltransferase.